The chain runs to 456 residues: uncharacterized protein (456 aa).

A YrdC-like domain is found at Ile277–Lys440.

This is an uncharacterized protein from Mycoplasma genitalium (strain ATCC 33530 / DSM 19775 / NCTC 10195 / G37) (Mycoplasmoides genitalium).